Here is a 245-residue protein sequence, read N- to C-terminus: MSQSGSALRRNGFTFKQFFVAHDRCAMKVGTDGILLGAWAPVADVKRILDIGTGSGLLALMLAQRTDDNVPIDAVELDAGAAMQAQENVAHSPWPHRITVHTDDIQRWAPRQTVRFDLIISNPPYYEPGVECATPQREQARYTATLDHQTLLAIAADCITEDGFFCVVLPEQIGNAFTQQALNMGWHLRLRTDVAENEARLPHRVLLAFSPQAGECFSDRLVIRGSDQHYSESYTALTQAFYLFM.

This sequence belongs to the methyltransferase superfamily. tRNA (adenine-N(6)-)-methyltransferase family.

The protein localises to the cytoplasm. It catalyses the reaction adenosine(37) in tRNA1(Val) + S-adenosyl-L-methionine = N(6)-methyladenosine(37) in tRNA1(Val) + S-adenosyl-L-homocysteine + H(+). Specifically methylates the adenine in position 37 of tRNA(1)(Val) (anticodon cmo5UAC). In Salmonella paratyphi A (strain ATCC 9150 / SARB42), this protein is tRNA1(Val) (adenine(37)-N6)-methyltransferase.